The following is a 122-amino-acid chain: Small ribosomal subunit protein uS13 (122 aa).

The interval 99–122 (RGQRTHTNARTRKGPAKAIAGKKK) is disordered.

Belongs to the universal ribosomal protein uS13 family. As to quaternary structure, part of the 30S ribosomal subunit. Forms a loose heterodimer with protein S19. Forms two bridges to the 50S subunit in the 70S ribosome.

In terms of biological role, located at the top of the head of the 30S subunit, it contacts several helices of the 16S rRNA. In the 70S ribosome it contacts the 23S rRNA (bridge B1a) and protein L5 of the 50S subunit (bridge B1b), connecting the 2 subunits; these bridges are implicated in subunit movement. Contacts the tRNAs in the A and P-sites. This Agrobacterium fabrum (strain C58 / ATCC 33970) (Agrobacterium tumefaciens (strain C58)) protein is Small ribosomal subunit protein uS13.